Reading from the N-terminus, the 64-residue chain is Cytochrome c oxidase subunit 9, mitochondrial (64 aa).

The Mitochondrial matrix segment spans residues 1–15 (MAATAVRPITGMLRR). A helical membrane pass occupies residues 16-36 (GLILDIGIALGVGFVMANGYW). At 37 to 64 (YGYHMPRTNARDNYYKKLEEERAARMGA) the chain is on the mitochondrial intermembrane side.

This sequence belongs to the fungal cytochrome c oxidase subunit 7a family. In terms of assembly, component of the cytochrome c oxidase (complex IV, CIV), a multisubunit enzyme composed of 11 subunits. The complex is composed of a catalytic core of 3 subunits Cox1, Cox2 and Cox3, encoded in the mitochondrial DNA, and 8 supernumerary subunits Cox4, Cox5a/Cox5, Cox6, Cox7, Cox8, Cox7a/Cox9, Cox6b/Cox12 and Cox6a/Cox13, which are encoded in the nuclear genome. The complex exists as a monomer or a dimer and forms respiratory supercomplexes (SCs) in the inner mitochondrial membrane with NADH-ubiquinone oxidoreductase (complex I, CI) and ubiquinol-cytochrome c oxidoreductase (cytochrome b-c1 complex, complex III, CIII), resulting in various different assemblies (supercomplexes I(1)IV(1), I(1)III(3)IV(2), III(2)IV(1) and III(2)IV(2) as well as larger supercomplexes of compositions like I(1)III(2)IV(5-6)).

The protein localises to the mitochondrion inner membrane. It functions in the pathway energy metabolism; oxidative phosphorylation. Its function is as follows. Component of the cytochrome c oxidase, the last enzyme in the mitochondrial electron transport chain which drives oxidative phosphorylation. The respiratory chain contains 3 multisubunit complexes succinate dehydrogenase (complex II, CII), ubiquinol-cytochrome c oxidoreductase (cytochrome b-c1 complex, complex III, CIII) and cytochrome c oxidase (complex IV, CIV), that cooperate to transfer electrons derived from NADH and succinate to molecular oxygen, creating an electrochemical gradient over the inner membrane that drives transmembrane transport and the ATP synthase. Cytochrome c oxidase is the component of the respiratory chain that catalyzes the reduction of oxygen to water. Electrons originating from reduced cytochrome c in the intermembrane space (IMS) are transferred via the dinuclear copper A center (CU(A)) of Cox2 and heme A of Cox1 to the active site in Cox1, a binuclear center (BNC) formed by heme A3 and copper B (CU(B)). The BNC reduces molecular oxygen to 2 water molecules using 4 electrons from cytochrome c in the IMS and 4 protons from the mitochondrial matrix. This is Cytochrome c oxidase subunit 9, mitochondrial (cox-17) from Neurospora crassa (strain ATCC 24698 / 74-OR23-1A / CBS 708.71 / DSM 1257 / FGSC 987).